Reading from the N-terminus, the 223-residue chain is Uracil-DNA glycosylase (223 aa).

Catalysis depends on aspartate 61, which acts as the Proton acceptor.

Belongs to the uracil-DNA glycosylase (UDG) superfamily. UNG family.

It is found in the cytoplasm. The enzyme catalyses Hydrolyzes single-stranded DNA or mismatched double-stranded DNA and polynucleotides, releasing free uracil.. Excises uracil residues from the DNA which can arise as a result of misincorporation of dUMP residues by DNA polymerase or due to deamination of cytosine. This Tolumonas auensis (strain DSM 9187 / NBRC 110442 / TA 4) protein is Uracil-DNA glycosylase.